The chain runs to 199 residues: Nucleoside triphosphate pyrophosphatase (199 aa).

The active-site Proton acceptor is Asp-72.

The protein belongs to the Maf family. Requires a divalent metal cation as cofactor.

It is found in the cytoplasm. It carries out the reaction a ribonucleoside 5'-triphosphate + H2O = a ribonucleoside 5'-phosphate + diphosphate + H(+). It catalyses the reaction a 2'-deoxyribonucleoside 5'-triphosphate + H2O = a 2'-deoxyribonucleoside 5'-phosphate + diphosphate + H(+). Its function is as follows. Nucleoside triphosphate pyrophosphatase. May have a dual role in cell division arrest and in preventing the incorporation of modified nucleotides into cellular nucleic acids. This Synechococcus elongatus (strain ATCC 33912 / PCC 7942 / FACHB-805) (Anacystis nidulans R2) protein is Nucleoside triphosphate pyrophosphatase.